The sequence spans 396 residues: Alanine racemase (396 aa).

The Proton acceptor; specific for D-alanine role is filled by K46. N6-(pyridoxal phosphate)lysine is present on K46. Residue R145 coordinates substrate. The Proton acceptor; specific for L-alanine role is filled by Y280. Residue M328 coordinates substrate.

It belongs to the alanine racemase family. Requires pyridoxal 5'-phosphate as cofactor.

The enzyme catalyses L-alanine = D-alanine. Its pathway is amino-acid biosynthesis; D-alanine biosynthesis; D-alanine from L-alanine: step 1/1. Functionally, catalyzes the interconversion of L-alanine and D-alanine. May also act on other amino acids. The polypeptide is Alanine racemase (alr) (Brucella suis (strain ATCC 23445 / NCTC 10510)).